The sequence spans 213 residues: Vacuolar ATPase assembly integral membrane protein vph2 (213 aa).

2 helical membrane-spanning segments follow: residues 113–133 (ISAI…VWYC) and 142–162 (KIAL…FLYV).

The protein localises to the endoplasmic reticulum membrane. Functionally, required for vacuolar ATPase assembly. The polypeptide is Vacuolar ATPase assembly integral membrane protein vph2 (vph2) (Schizosaccharomyces pombe (strain 972 / ATCC 24843) (Fission yeast)).